A 522-amino-acid polypeptide reads, in one-letter code: Serine/threonine-protein kinase pak-2 (522 aa).

One can recognise a CRIB domain in the interval 16 to 29 (ISTPSNFEHRIHAG). Over residues 183–204 (TTTPQLQPKSPSTPQAMRQQPK) the composition is skewed to polar residues. The tract at residues 183–208 (TTTPQLQPKSPSTPQAMRQQPKCTEG) is disordered. One can recognise a Protein kinase domain in the interval 231–482 (LTDYKQIGEG…AKDLLRHPFF (252 aa)). ATP contacts are provided by residues 237–245 (IGEGSTGVV) and lysine 260. Aspartate 350 (proton acceptor) is an active-site residue.

Belongs to the protein kinase superfamily. STE Ser/Thr protein kinase family. STE20 subfamily. It depends on Mg(2+) as a cofactor. Mn(2+) is required as a cofactor. As to expression, expressed in pharynx, vulva and spermatheca. Unlike other p21-activated kinases, expression is not detected in neurons.

It catalyses the reaction L-seryl-[protein] + ATP = O-phospho-L-seryl-[protein] + ADP + H(+). It carries out the reaction L-threonyl-[protein] + ATP = O-phospho-L-threonyl-[protein] + ADP + H(+). Serine/threonine-protein kinase which plays a redundant role with pak-1 in embryogenesis but, in contrast to pak-1, is not involved in commissural axon guidance of ventral cord motoneurons or in distal tip cell (DTC) migration. The sequence is that of Serine/threonine-protein kinase pak-2 from Caenorhabditis elegans.